Consider the following 245-residue polypeptide: tRNA1(Val) (adenine(37)-N6)-methyltransferase (245 aa).

It belongs to the methyltransferase superfamily. tRNA (adenine-N(6)-)-methyltransferase family.

The protein localises to the cytoplasm. The enzyme catalyses adenosine(37) in tRNA1(Val) + S-adenosyl-L-methionine = N(6)-methyladenosine(37) in tRNA1(Val) + S-adenosyl-L-homocysteine + H(+). Its function is as follows. Specifically methylates the adenine in position 37 of tRNA(1)(Val) (anticodon cmo5UAC). The polypeptide is tRNA1(Val) (adenine(37)-N6)-methyltransferase (Escherichia coli (strain UTI89 / UPEC)).